We begin with the raw amino-acid sequence, 457 residues long: tRNA modification GTPase MnmE (457 aa).

Residues Arg-24, Glu-81, and Lys-124 each coordinate (6S)-5-formyl-5,6,7,8-tetrahydrofolate. The region spanning 220 to 379 (GIQLVLAGAP…LKQKILHVVG (160 aa)) is the TrmE-type G domain. Asn-230 serves as a coordination point for K(+). GTP-binding positions include 230–235 (NVGKSS), 249–255 (TPIAGTT), and 274–277 (DTAG). Position 234 (Ser-234) interacts with Mg(2+). The K(+) site is built by Thr-249, Ile-251, and Thr-254. Residue Thr-255 coordinates Mg(2+). Lys-457 contacts (6S)-5-formyl-5,6,7,8-tetrahydrofolate.

This sequence belongs to the TRAFAC class TrmE-Era-EngA-EngB-Septin-like GTPase superfamily. TrmE GTPase family. Homodimer. Heterotetramer of two MnmE and two MnmG subunits. It depends on K(+) as a cofactor.

It localises to the cytoplasm. Functionally, exhibits a very high intrinsic GTPase hydrolysis rate. Involved in the addition of a carboxymethylaminomethyl (cmnm) group at the wobble position (U34) of certain tRNAs, forming tRNA-cmnm(5)s(2)U34. This chain is tRNA modification GTPase MnmE, found in Polynucleobacter asymbioticus (strain DSM 18221 / CIP 109841 / QLW-P1DMWA-1) (Polynucleobacter necessarius subsp. asymbioticus).